The primary structure comprises 105 residues: Small ribosomal subunit protein uS10 (105 aa).

The protein belongs to the universal ribosomal protein uS10 family. As to quaternary structure, part of the 30S ribosomal subunit.

Involved in the binding of tRNA to the ribosomes. In Phytoplasma australiense, this protein is Small ribosomal subunit protein uS10.